Consider the following 250-residue polypeptide: Proteasome subunit alpha type-4-1 (250 aa).

The protein belongs to the peptidase T1A family. As to quaternary structure, the 26S proteasome consists of a 20S proteasome core and two 19S regulatory subunits. The 20S proteasome core is composed of 28 subunits that are arranged in four stacked rings, resulting in a barrel-shaped structure. The two end rings are each formed by seven alpha subunits, and the two central rings are each formed by seven beta subunits. The catalytic chamber with the active sites is on the inside of the barrel.

The protein resides in the cytoplasm. Its subcellular location is the nucleus. Functionally, the proteasome is a multicatalytic proteinase complex which is characterized by its ability to cleave peptides with Arg, Phe, Tyr, Leu, and Glu adjacent to the leaving group at neutral or slightly basic pH. The proteasome has an ATP-dependent proteolytic activity. The sequence is that of Proteasome subunit alpha type-4-1 from Oryza sativa subsp. indica (Rice).